Reading from the N-terminus, the 208-residue chain is Small ribosomal subunit protein uS4 (208 aa).

Positions 31-51 (SALDKRAYGPGQHGQRRAKTS) are disordered. Residues 98 to 156 (RRLDNVVYRMGFATTRSSARQLVTHGHVLVDGKRLDIPSYFVRSGQKIEIKEKTKSNPQ) enclose the S4 RNA-binding domain.

This sequence belongs to the universal ribosomal protein uS4 family. In terms of assembly, part of the 30S ribosomal subunit. Contacts protein S5. The interaction surface between S4 and S5 is involved in control of translational fidelity.

One of the primary rRNA binding proteins, it binds directly to 16S rRNA where it nucleates assembly of the body of the 30S subunit. In terms of biological role, with S5 and S12 plays an important role in translational accuracy. This is Small ribosomal subunit protein uS4 from Helicobacter pylori (strain HPAG1).